The primary structure comprises 735 residues: FHF complex subunit HOOK-interacting protein 2B (735 aa).

The tract at residues S183–Q229 is disordered. Over residues S196 to G221 the composition is skewed to low complexity.

The protein belongs to the FHIP family.

The chain is FHF complex subunit HOOK-interacting protein 2B (fhip2b) from Danio rerio (Zebrafish).